A 376-amino-acid chain; its full sequence is Tetraacyldisaccharide 4'-kinase (376 aa).

ATP is bound at residue 51–58; the sequence is AVGGTGKT.

The protein belongs to the LpxK family.

It carries out the reaction a lipid A disaccharide + ATP = a lipid IVA + ADP + H(+). It functions in the pathway glycolipid biosynthesis; lipid IV(A) biosynthesis; lipid IV(A) from (3R)-3-hydroxytetradecanoyl-[acyl-carrier-protein] and UDP-N-acetyl-alpha-D-glucosamine: step 6/6. Functionally, transfers the gamma-phosphate of ATP to the 4'-position of a tetraacyldisaccharide 1-phosphate intermediate (termed DS-1-P) to form tetraacyldisaccharide 1,4'-bis-phosphate (lipid IVA). The sequence is that of Tetraacyldisaccharide 4'-kinase from Bacteroides fragilis (strain ATCC 25285 / DSM 2151 / CCUG 4856 / JCM 11019 / LMG 10263 / NCTC 9343 / Onslow / VPI 2553 / EN-2).